Reading from the N-terminus, the 595-residue chain is MDVRRRSEKPVYPSKVFGADEKPLKPHNNQQQEDNNTLLIDASDALPLPLYLTNGLFFTMFFSVMYFLLSRWREKIRNSTPLHVVTLSELGAIVSLIASVIYLLGFFGIGFVQTFVSRGNNDSWDENDEEFLLKEDSRCGPATTLGCAIPAPPARQISPMAPPQPAMSMVEKPSPLITPASSEEDEEIINSVVQGKFPSYSLVIQLGDVSAAASLRKEVMQRITGKSLEGLPLEGFTYESILGQCCEMPIGYVQIPVGIAGPLLLNGKEFSVPMATTEGCLVASTNRGCKAIYASGGATCIVLRDGMTRAPCVRFGTAKRAAELKFFVEDPIKFETLANVFNQSSRFGRLQRIQCAIAGKNLYMRFVCSTGDAMGMNMVSKGVQNVLDYLQNEYPDMDVIGISGNFCSDKKPAAVNWIEGRGKSVVCEAIITEEVVKKVLKTEVAALVELNMLKNLTGSAMAGALGGFNAHASNIVSAVFIATGQDPAQNIESSHCITMMEAVNDGKDLHISVTMPSIEVGTVGGGTQLASQSACLNLLGVKGANREAPGSNARLLATVVAGSVLAGELSLMSAISAGQLVNSHMKYNRSTKASS.

N-linked (GlcNAc...) asparagine glycosylation occurs at Asn-35. 2 consecutive transmembrane segments (helical) span residues Leu-48–Leu-68 and Ala-92–Val-112. The linker stretch occupies residues Gln-113–Glu-183. Residue Asn-121 is glycosylated (N-linked (GlcNAc...) asparagine). The tract at residues Glu-184 to Ser-595 is catalytic. Glu-278 serves as the catalytic Charge relay system. Asn-342 is a glycosylation site (N-linked (GlcNAc...) asparagine). Lys-410 serves as the catalytic Charge relay system. An N-linked (GlcNAc...) asparagine glycan is attached at Asn-455. Asp-486 (charge relay system) is an active-site residue. His-584 serves as the catalytic Proton donor. Residue Asn-588 is glycosylated (N-linked (GlcNAc...) asparagine).

Belongs to the HMG-CoA reductase family. In terms of tissue distribution, expressed in young flowers and in mature sepals and ovaries.

It is found in the endoplasmic reticulum membrane. The catalysed reaction is (R)-mevalonate + 2 NADP(+) + CoA = (3S)-3-hydroxy-3-methylglutaryl-CoA + 2 NADPH + 2 H(+). It functions in the pathway metabolic intermediate biosynthesis; (R)-mevalonate biosynthesis; (R)-mevalonate from acetyl-CoA: step 3/3. Its function is as follows. Catalyzes the synthesis of mevalonate. The specific precursor of all isoprenoid compounds present in plants. This is 3-hydroxy-3-methylglutaryl-coenzyme A reductase 2 (HMG2) from Solanum tuberosum (Potato).